The following is a 246-amino-acid chain: Probable transcriptional regulatory protein KPK_1906 (246 aa).

This sequence belongs to the TACO1 family.

The protein resides in the cytoplasm. The chain is Probable transcriptional regulatory protein KPK_1906 from Klebsiella pneumoniae (strain 342).